Consider the following 87-residue polypeptide: RNA-binding protein Hfq (87 aa).

A Sm domain is found at 9 to 68 (DPFLNTLRRERIPVSIYLVNGIKLQGYIESFDQFVILLKNSISQMIYKHAISTVVPNHTN). The interval 66–87 (HTNNQEHNQSQYNNNNACISKP) is disordered.

It belongs to the Hfq family. Homohexamer.

Functionally, RNA chaperone that binds small regulatory RNA (sRNAs) and mRNAs to facilitate mRNA translational regulation in response to envelope stress, environmental stress and changes in metabolite concentrations. Also binds with high specificity to tRNAs. This is RNA-binding protein Hfq from Wigglesworthia glossinidia brevipalpis.